The primary structure comprises 392 residues: Galactokinase (392 aa).

Arg-37, Glu-43, His-44, and Asp-46 together coordinate alpha-D-galactose. ATP is bound by residues Gly-136, Gly-138, Ser-140, and Ser-141. Asp-186 serves as a coordination point for alpha-D-galactose. The active-site Proton acceptor is Asp-186. A Phosphoserine modification is found at Ser-230. Tyr-236 lines the alpha-D-galactose pocket.

It belongs to the GHMP kinase family. GalK subfamily. In terms of assembly, homodimer.

It catalyses the reaction alpha-D-galactose + ATP = alpha-D-galactose 1-phosphate + ADP + H(+). The protein operates within carbohydrate metabolism; galactose metabolism. Catalyzes the transfer of a phosphate from ATP to alpha-D-galactose and participates in the first committed step in the catabolism of galactose. This chain is Galactokinase (GALK1), found in Bos taurus (Bovine).